The following is a 180-amino-acid chain: Putative methyltransferase YrhH (180 aa).

Belongs to the methyltransferase superfamily.

The chain is Putative methyltransferase YrhH (yrhH) from Bacillus subtilis (strain 168).